We begin with the raw amino-acid sequence, 476 residues long: Serine/threonine-protein kinase PknF (476 aa).

Residues Thr8 and Thr13 each carry the phosphothreonine; by autocatalysis modification. One can recognise a Protein kinase domain in the interval 12–279 (FTIVRQLGSG…FARALGHRLG (268 aa)). ATP is bound by residues 18–26 (LGSGGMGEV) and Lys41. Residue Asp137 is the Proton acceptor of the active site. 3 positions are modified to phosphothreonine; by autocatalysis: Thr173, Thr175, and Thr287. Ser290 is subject to Phosphoserine; by autocatalysis. The tract at residues 332–376 (ADDERAAQPARTRTTTSAGTTTSVAPASTTRPAPTTPTTTGAADT) is disordered. Over residues 338 to 376 (AQPARTRTTTSAGTTTSVAPASTTRPAPTTPTTTGAADT) the composition is skewed to low complexity.

Belongs to the protein kinase superfamily. Ser/Thr protein kinase family. Dephosphorylated by PstP.

It carries out the reaction L-seryl-[protein] + ATP = O-phospho-L-seryl-[protein] + ADP + H(+). It catalyses the reaction L-threonyl-[protein] + ATP = O-phospho-L-threonyl-[protein] + ADP + H(+). This Mycobacterium bovis (strain ATCC BAA-935 / AF2122/97) protein is Serine/threonine-protein kinase PknF (pknF).